The sequence spans 391 residues: Cystathionine beta-lyase MetC (391 aa).

K196 bears the N6-(pyridoxal phosphate)lysine mark.

Belongs to the trans-sulfuration enzymes family. Homotetramer. Pyridoxal 5'-phosphate serves as cofactor.

It carries out the reaction L,L-cystathionine + H2O = L-homocysteine + pyruvate + NH4(+). It catalyses the reaction an S-substituted L-cysteine + H2O = a thiol + pyruvate + NH4(+). Its pathway is amino-acid biosynthesis; L-methionine biosynthesis via de novo pathway; L-homocysteine from L-cystathionine: step 1/1. With respect to regulation, cystathionine beta-lyase activity is inhibited by sweat components such as glycine, serine and ammonium sulfate. Inhibited by cystathionine at a concentration higher than 6 mM. Catalyzes the transformation of cystathionine into homocysteine. Can also catalyze, at low levels, the conversion of cystathionine into methionine and the conversion of methionine into methanethiol. This Staphylococcus haemolyticus (strain JCSC1435) protein is Cystathionine beta-lyase MetC.